A 463-amino-acid polypeptide reads, in one-letter code: MMSSRTQDADGASIRFSDHTLDKATKAKVTLENYYSNLVTQYGERKQRLAKLEAQLKDESLSEAQRQEKRLQHAQKETEYLRLKRLRLGVEDFEALKVIGRGAFGEVRLVQKKDTGHVYAMKVLRKADMLEKEQVAHVRAERDVLVEADHQWVVKMYYSFQDPVNLYLIMEFLPGGDMMTLLMKKDTLSEEGTQFYISETALAIDSIHKLGFIHRDIKPDNLLLDARGHLKLSDFGLCTGLKKSHRTDFYRDLSQAKPSDFIGTCASLSCSPMDSKRRAESWKRNRRALAYSTVGTPDYIAPEVFLQTGYGPACDWWSLGVIMYEMLMGYPPFCSDNPQDTYRKVMNWRETLIFPPEIPISEEAKETIINFCCEADRRLGSQRGLEDLKSVPFFRGVDWEHIRERPAAIPVEVRSIDDTSNFDEFPDVSLEIPSAPIPQGGEIAKDWVFINYTYKRFEVRNLE.

Residues 93-394 form the Protein kinase domain; it reads FEALKVIGRG…LEDLKSVPFF (302 aa). Residues 99–107 and K122 contribute to the ATP site; that span reads IGRGAFGEV. The tract at residues 119–180 is interaction with mats and Mob1; that stretch reads YAMKVLRKAD…EFLPGGDMMT (62 aa). D216 (proton acceptor) is an active-site residue. S292 is subject to Phosphoserine. The AGC-kinase C-terminal domain occupies 395–463; sequence RGVDWEHIRE…YKRFEVRNLE (69 aa). T453 bears the Phosphothreonine mark.

This sequence belongs to the protein kinase superfamily. AGC Ser/Thr protein kinase family. As to quaternary structure, interacts with, and is activated by, Mob1. Mg(2+) serves as cofactor. Expressed in the peripheral and central nervous system (at protein level). Expressed in the wing imaginal disk.

It is found in the cytoplasm. The protein localises to the nucleus. It catalyses the reaction L-seryl-[protein] + ATP = O-phospho-L-seryl-[protein] + ADP + H(+). The catalysed reaction is L-threonyl-[protein] + ATP = O-phospho-L-threonyl-[protein] + ADP + H(+). With respect to regulation, activated by fry. In terms of biological role, serine/threonine-protein kinase involved in controlling cell structure and proliferation of a variety of polarized outgrowths including epidermal hairs, bristles, arista laterals, and dendrites. Together with fry, maintains the integrity of epidermal hairs and is an essential component of the signaling pathway regulating dendritic branching of sensory neurons. Reduces neurite outgrowth by phosphorylating pav, thereby inhibiting its function in microtubule-microtubule sliding. In Drosophila melanogaster (Fruit fly), this protein is Serine/threonine-protein kinase tricornered.